The primary structure comprises 510 residues: Tryptophan 6-hydroxylase fscE (510 aa).

A helical membrane pass occupies residues L11–I31. Position 452 (C452) interacts with heme.

The protein belongs to the cytochrome P450 family. Requires heme as cofactor.

The protein localises to the membrane. The protein operates within secondary metabolite biosynthesis. Its function is as follows. Tryptophan 6-hydroxylase; part of the fragmented gene cluster that mediates the biosynthesis of fusarochromene, a tryptophan-derived metabolite closely related to a group of mycotoxins including fusarochromanone. Within the pathway, fscE hydroxalates the first intermediate D-tryptophan to yield 6-hydroxytryptophan. The first step of the pathway is the epimerization of L-tryptophan to D-tryptophan in the presence of the NRPS-like tryptophan epimerase fscC. D-tryptophan is subsequently hydroxylated by the tryptophan 6-hydroxylase fscE to yield 6-hydroxytryptophan. The pyrrole ring undergoes cleavaged by the tryptophan 2,3-dioxygenase fscD and is finally converted to 4-hydroxykyrunenine by the hydrolase fscH. The NRPS-like oxidoreductase fscA reduces the carboxyl group to primary alcohol and the DMATS-type prenyltransferase fscG performs prenylation, followed by the formation of a chromene ring catalyzed by the oxidoreductase fscI, which leads to desacetylfusarochromene. Epoxidation by fscF and rearrangement reactions of chromene double bonds convert compound desacetylfusarochromene to fusarochromanones. Although specific acetyltransferases were not found near the fsc gene cluster, several predicted enzymes containing the N-acetyltransferase superfamily domain are present in the genome of F.equiseti. These predicted enzymes may have the potential to convert desacetylfusarochromene to fusarochromene. This Fusarium equiseti (Fusarium scirpi) protein is Tryptophan 6-hydroxylase fscE.